Reading from the N-terminus, the 417-residue chain is Tryptophan synthase beta chain (417 aa).

N6-(pyridoxal phosphate)lysine is present on Lys-110.

This sequence belongs to the TrpB family. As to quaternary structure, tetramer of two alpha and two beta chains. Pyridoxal 5'-phosphate serves as cofactor.

It carries out the reaction (1S,2R)-1-C-(indol-3-yl)glycerol 3-phosphate + L-serine = D-glyceraldehyde 3-phosphate + L-tryptophan + H2O. Its pathway is amino-acid biosynthesis; L-tryptophan biosynthesis; L-tryptophan from chorismate: step 5/5. In terms of biological role, the beta subunit is responsible for the synthesis of L-tryptophan from indole and L-serine. The protein is Tryptophan synthase beta chain of Prochlorococcus marinus (strain NATL2A).